The following is an 890-amino-acid chain: Chloroquine resistance transporter (890 aa).

Disordered stretches follow at residues 1-163 (MPPA…EAPL) and 280-300 (GMQRPCFGSPSTDTRMGAAEG). The Cytoplasmic portion of the chain corresponds to 1 to 349 (MPPAHHGSGG…RATRWIDRNA (349 aa)). Residues 8–19 (SGGRRRPGRGNK) are compositionally biased toward basic residues. 2 stretches are compositionally biased toward low complexity: residues 102–126 (APSQSDLPPSLSPTTASRPATSSRS) and 134–156 (SPVASSSAFSSPAPSASALTSAS). Residues 350–372 (ATVRVACYTFLLLVTSTGNTICF) form a helical membrane-spanning segment. Over 373–391 (KKMIDKMPNYSPCLTQVTT) the chain is Vacuolar. The chain crosses the membrane as a helical span at residues 392–412 (VVFVPVFFALSLYTDYAGGLP). The Cytoplasmic portion of the chain corresponds to 413–422 (QEMADFPKRN). The helical transmembrane segment at 423-443 (FAVMGFLDSFSGVMAIIGAVH) threads the bilayer. Residues 444-447 (TTGT) are Vacuolar-facing. A helical transmembrane segment spans residues 448–468 (TQVVLQQSCIVFSLLASIVML). The Cytoplasmic segment spans residues 469-471 (RKR). The helical transmembrane segment at 472-492 (FHAAHYLGALVIILGVLVVKL) threads the bilayer. Over 493–505 (PDLLHPSSDGGGD) the chain is Vacuolar. The chain crosses the membrane as a helical span at residues 506-526 (VFVFNLLYLLSNLPTAVSCVY). Residues 527–544 (KEVAFRGVEMGTNYLQAW) are Cytoplasmic-facing. The helical transmembrane segment at 545 to 565 (VALFQFLIGFLVLPLNALPVL) threads the bilayer. The Vacuolar segment spans residues 566–614 (GPQRVPLAELPASLWNGTRCLFGFNTIVTNCGGAGNMESPCDNCEGAWK). Asparagine 581 carries an N-linked (GlcNAc...) asparagine glycan. Intrachain disulfides connect cysteine 585/cysteine 609 and cysteine 596/cysteine 606. The helical transmembrane segment at 615-634 (YVGMYLSFNLLYNMFIIFVV) threads the bilayer. Over 635 to 640 (KSGGAA) the chain is Cytoplasmic. A helical membrane pass occupies residues 641–663 (LTFLVSTLRLPVTALAFCSRAIM). Residues 664 to 673 (GDRAVPPKAT) lie on the Vacuolar side of the membrane. The helical transmembrane segment at 674–694 (DFYGLLVLILGLVIYRAGGIM) threads the bilayer. Over 695-890 (KRRAQRRAVA…GKSRANNGCI (196 aa)) the chain is Cytoplasmic. A disordered region spans residues 798 to 871 (AAFTPFTQRM…NRVGGYEPPS (74 aa)).

The protein belongs to the CRT-like transporter family.

The protein resides in the vacuole membrane. Its function is as follows. Nutrient transporter. Involved in maintaining the osmotic homeostasis of the digestive vacuole. Required for the proper organization of the endolysosomal system and, in turn, indirectly for microneme secretion and parasite invasion. Required for bradyzoite viability and cyst development. The chain is Chloroquine resistance transporter from Toxoplasma gondii.